Reading from the N-terminus, the 273-residue chain is Ribosomal RNA small subunit methyltransferase A (273 aa).

S-adenosyl-L-methionine-binding residues include asparagine 18, leucine 20, glycine 45, glutamate 66, aspartate 91, and asparagine 113.

This sequence belongs to the class I-like SAM-binding methyltransferase superfamily. rRNA adenine N(6)-methyltransferase family. RsmA subfamily.

It is found in the cytoplasm. It carries out the reaction adenosine(1518)/adenosine(1519) in 16S rRNA + 4 S-adenosyl-L-methionine = N(6)-dimethyladenosine(1518)/N(6)-dimethyladenosine(1519) in 16S rRNA + 4 S-adenosyl-L-homocysteine + 4 H(+). In terms of biological role, specifically dimethylates two adjacent adenosines (A1518 and A1519) in the loop of a conserved hairpin near the 3'-end of 16S rRNA in the 30S particle. May play a critical role in biogenesis of 30S subunits. In Escherichia fergusonii (strain ATCC 35469 / DSM 13698 / CCUG 18766 / IAM 14443 / JCM 21226 / LMG 7866 / NBRC 102419 / NCTC 12128 / CDC 0568-73), this protein is Ribosomal RNA small subunit methyltransferase A.